Here is a 256-residue protein sequence, read N- to C-terminus: Thiazole synthase (256 aa).

Lys99 (schiff-base intermediate with DXP) is an active-site residue. Residues Gly160, 186–187, and 208–209 each bind 1-deoxy-D-xylulose 5-phosphate; these read AG and NT.

The protein belongs to the ThiG family. As to quaternary structure, homotetramer. Forms heterodimers with either ThiH or ThiS.

Its subcellular location is the cytoplasm. It catalyses the reaction [ThiS sulfur-carrier protein]-C-terminal-Gly-aminoethanethioate + 2-iminoacetate + 1-deoxy-D-xylulose 5-phosphate = [ThiS sulfur-carrier protein]-C-terminal Gly-Gly + 2-[(2R,5Z)-2-carboxy-4-methylthiazol-5(2H)-ylidene]ethyl phosphate + 2 H2O + H(+). Its pathway is cofactor biosynthesis; thiamine diphosphate biosynthesis. Catalyzes the rearrangement of 1-deoxy-D-xylulose 5-phosphate (DXP) to produce the thiazole phosphate moiety of thiamine. Sulfur is provided by the thiocarboxylate moiety of the carrier protein ThiS. In vitro, sulfur can be provided by H(2)S. This Neorickettsia sennetsu (strain ATCC VR-367 / Miyayama) (Ehrlichia sennetsu) protein is Thiazole synthase.